A 118-amino-acid chain; its full sequence is Large ribosomal subunit protein uL22 (118 aa).

Belongs to the universal ribosomal protein uL22 family. As to quaternary structure, part of the 50S ribosomal subunit.

Functionally, this protein binds specifically to 23S rRNA; its binding is stimulated by other ribosomal proteins, e.g. L4, L17, and L20. It is important during the early stages of 50S assembly. It makes multiple contacts with different domains of the 23S rRNA in the assembled 50S subunit and ribosome. The globular domain of the protein is located near the polypeptide exit tunnel on the outside of the subunit, while an extended beta-hairpin is found that lines the wall of the exit tunnel in the center of the 70S ribosome. The sequence is that of Large ribosomal subunit protein uL22 from Synechococcus sp. (strain RCC307).